Consider the following 122-residue polypeptide: Basic phospholipase A2 homolog ecarpholin S (122 aa).

Cystine bridges form between Cys26–Cys115, Cys28–Cys44, Cys43–Cys95, Cys49–Cys122, Cys50–Cys88, Cys57–Cys81, and Cys75–Cys86. Residues Lys105–Gly117 are important for membrane-damaging activities in eukaryotes and bacteria; heparin-binding.

As to expression, expressed by the venom gland.

The protein resides in the secreted. Its activity is regulated as follows. Suramin inhibits the myotoxic activity. In terms of biological role, snake venom phospholipase A2 homolog that lacks enzymatic activity. Shows high myotoxin activities and displays edema-inducing activities. In Echis carinatus (Saw-scaled viper), this protein is Basic phospholipase A2 homolog ecarpholin S.